The primary structure comprises 100 residues: Urease subunit gamma (100 aa).

The protein belongs to the urease gamma subunit family. Heterotrimer of UreA (gamma), UreB (beta) and UreC (alpha) subunits. Three heterotrimers associate to form the active enzyme.

Its subcellular location is the cytoplasm. It catalyses the reaction urea + 2 H2O + H(+) = hydrogencarbonate + 2 NH4(+). It functions in the pathway nitrogen metabolism; urea degradation; CO(2) and NH(3) from urea (urease route): step 1/1. This chain is Urease subunit gamma, found in Pseudomonas aeruginosa (strain LESB58).